Here is a 181-residue protein sequence, read N- to C-terminus: Putative J domain-containing protein R266 (181 aa).

The region spanning 6-70 (NYYQILDVDN…LKRLNYDSYL (65 aa)) is the J domain.

This chain is Putative J domain-containing protein R266, found in Acanthamoeba polyphaga (Amoeba).